We begin with the raw amino-acid sequence, 203 residues long: VEL1-related protein SPBPB2B2.15 (203 aa).

The signal sequence occupies residues 1-16 (MFKNLIFLFFIGLATA).

Belongs to the VEL1 family.

The protein resides in the cytoplasm. It is found in the cytosol. The polypeptide is VEL1-related protein SPBPB2B2.15 (Schizosaccharomyces pombe (strain 972 / ATCC 24843) (Fission yeast)).